The sequence spans 170 residues: Translation machinery-associated protein 16 homolog (170 aa).

Belongs to the TMA16 family.

The sequence is that of Translation machinery-associated protein 16 homolog from Dictyostelium discoideum (Social amoeba).